The primary structure comprises 289 residues: ATP synthase subunit a (289 aa).

A run of 6 helical transmembrane segments spans residues 43 to 63, 103 to 123, 160 to 180, 193 to 213, 232 to 252, and 259 to 279; these read AFHLDTLGWSVALGLIFLLIF, VIAPLALTIFVWVFLMNAVDL, FCVFALIIFYSIKVKGLGGFI, IFVQILLIPVNFLLEFVTLIA, VFILIAVMFGSGLLWLSGLGV, and AVFHILIITLQAFIFMMLTIV.

This sequence belongs to the ATPase A chain family. In terms of assembly, F-type ATPases have 2 components, CF(1) - the catalytic core - and CF(0) - the membrane proton channel. CF(1) has five subunits: alpha(3), beta(3), gamma(1), delta(1), epsilon(1). CF(0) has three main subunits: a(1), b(2) and c(9-12). The alpha and beta chains form an alternating ring which encloses part of the gamma chain. CF(1) is attached to CF(0) by a central stalk formed by the gamma and epsilon chains, while a peripheral stalk is formed by the delta and b chains.

The protein resides in the cell inner membrane. Its function is as follows. Key component of the proton channel; it plays a direct role in the translocation of protons across the membrane. The chain is ATP synthase subunit a from Pseudomonas putida (strain ATCC 700007 / DSM 6899 / JCM 31910 / BCRC 17059 / LMG 24140 / F1).